Consider the following 508-residue polypeptide: Transcription termination factor MTERF4, chloroplastic (508 aa).

Residues 1–79 constitute a chloroplast transit peptide; it reads MMKSLFLFSA…PSLLDMERGR (79 aa). Low complexity predominate over residues 28-49; the sequence is RLTASASTSASSPPRAGCSRGP. Disordered regions lie at residues 28–69 and 475–508; these read RLTA…LYAR and FDTN…EFIE. Residues 484–508 show a composition bias toward acidic residues; the sequence is VEDEVEDEDLDEDSDYDSTDDEFIE.

It belongs to the mTERF family.

It is found in the plastid. The protein localises to the chloroplast stroma. Transcription termination factor required for processing and steady-state levels of plastid transcripts. Required for splicing of the chloroplastic group II intron. Required for the accumulation of 16S and 23S ribosomes. The sequence is that of Transcription termination factor MTERF4, chloroplastic from Oryza sativa subsp. japonica (Rice).